A 69-amino-acid chain; its full sequence is uncharacterized protein (69 aa).

This is an uncharacterized protein from Saccharolobus islandicus (Sulfolobus islandicus).